The chain runs to 201 residues: Small ribosomal subunit protein uS4 (201 aa).

Positions 26-45 are disordered; sequence FEKRNYPPGQHGNNRRRGKK. Positions 93 to 153 constitute an S4 RNA-binding domain; the sequence is SRLDNVVYRM…EKSKSLAVVQ (61 aa).

It belongs to the universal ribosomal protein uS4 family. In terms of assembly, part of the 30S ribosomal subunit. Contacts protein S5. The interaction surface between S4 and S5 is involved in control of translational fidelity.

Functionally, one of the primary rRNA binding proteins, it binds directly to 16S rRNA where it nucleates assembly of the body of the 30S subunit. Its function is as follows. With S5 and S12 plays an important role in translational accuracy. In Christiangramia forsetii (strain DSM 17595 / CGMCC 1.15422 / KT0803) (Gramella forsetii), this protein is Small ribosomal subunit protein uS4.